The following is a 250-amino-acid chain: 5-oxoprolinase subunit A (250 aa).

It belongs to the LamB/PxpA family. As to quaternary structure, forms a complex composed of PxpA, PxpB and PxpC.

The catalysed reaction is 5-oxo-L-proline + ATP + 2 H2O = L-glutamate + ADP + phosphate + H(+). Its function is as follows. Catalyzes the cleavage of 5-oxoproline to form L-glutamate coupled to the hydrolysis of ATP to ADP and inorganic phosphate. In Staphylococcus aureus (strain bovine RF122 / ET3-1), this protein is 5-oxoprolinase subunit A.